The primary structure comprises 278 residues: Probable endonuclease 4 (278 aa).

Zn(2+) contacts are provided by H66, H106, E142, D176, H179, H213, D226, H228, and E258.

It belongs to the AP endonuclease 2 family. The cofactor is Zn(2+).

The enzyme catalyses Endonucleolytic cleavage to 5'-phosphooligonucleotide end-products.. Endonuclease IV plays a role in DNA repair. It cleaves phosphodiester bonds at apurinic or apyrimidinic (AP) sites, generating a 3'-hydroxyl group and a 5'-terminal sugar phosphate. This chain is Probable endonuclease 4, found in Halothermothrix orenii (strain H 168 / OCM 544 / DSM 9562).